Consider the following 210-residue polypeptide: Large ribosomal subunit protein uL3 (210 aa).

A disordered region spans residues 125 to 151 (RHGQSRGPMSHGSRYHRRPGSMGPVAP).

The protein belongs to the universal ribosomal protein uL3 family. In terms of assembly, part of the 50S ribosomal subunit. Forms a cluster with proteins L14 and L19.

Its function is as follows. One of the primary rRNA binding proteins, it binds directly near the 3'-end of the 23S rRNA, where it nucleates assembly of the 50S subunit. This is Large ribosomal subunit protein uL3 from Bacillus mycoides (strain KBAB4) (Bacillus weihenstephanensis).